Here is a 98-residue protein sequence, read N- to C-terminus: NADH-ubiquinone oxidoreductase chain 4L (98 aa).

The next 3 membrane-spanning stretches (helical) occupy residues 2-22 (TLVM…TLMF), 26-46 (LMST…MAVI), and 61-81 (IIIL…LAMV).

Belongs to the complex I subunit 4L family. In terms of assembly, core subunit of respiratory chain NADH dehydrogenase (Complex I) which is composed of 45 different subunits.

Its subcellular location is the mitochondrion inner membrane. It carries out the reaction a ubiquinone + NADH + 5 H(+)(in) = a ubiquinol + NAD(+) + 4 H(+)(out). Core subunit of the mitochondrial membrane respiratory chain NADH dehydrogenase (Complex I) which catalyzes electron transfer from NADH through the respiratory chain, using ubiquinone as an electron acceptor. Part of the enzyme membrane arm which is embedded in the lipid bilayer and involved in proton translocation. The chain is NADH-ubiquinone oxidoreductase chain 4L (MT-ND4L) from Nyctomys sumichrasti (Sumichrast's vesper rat).